We begin with the raw amino-acid sequence, 272 residues long: NH(3)-dependent NAD(+) synthetase (272 aa).

45–52 (GISGGQDS) contributes to the ATP binding site. Asp-51 provides a ligand contact to Mg(2+). Arg-138 is a binding site for deamido-NAD(+). Thr-158 provides a ligand contact to ATP. A Mg(2+)-binding site is contributed by Glu-163. 2 residues coordinate deamido-NAD(+): Lys-171 and Asp-178. Residues Lys-187 and Thr-209 each coordinate ATP. Deamido-NAD(+) is bound at residue 258-259 (HK).

It belongs to the NAD synthetase family. In terms of assembly, homodimer.

It catalyses the reaction deamido-NAD(+) + NH4(+) + ATP = AMP + diphosphate + NAD(+) + H(+). Its pathway is cofactor biosynthesis; NAD(+) biosynthesis; NAD(+) from deamido-NAD(+) (ammonia route): step 1/1. Its function is as follows. Catalyzes the ATP-dependent amidation of deamido-NAD to form NAD. Uses ammonia as a nitrogen source. This is NH(3)-dependent NAD(+) synthetase from Bacillus cereus (strain AH187).